The sequence spans 433 residues: Serine hydroxymethyltransferase (433 aa).

(6S)-5,6,7,8-tetrahydrofolate is bound by residues leucine 131 and 135-137 (GHL). Position 240 is an N6-(pyridoxal phosphate)lysine (lysine 240).

This sequence belongs to the SHMT family. Homodimer. Requires pyridoxal 5'-phosphate as cofactor.

It is found in the cytoplasm. It carries out the reaction (6R)-5,10-methylene-5,6,7,8-tetrahydrofolate + glycine + H2O = (6S)-5,6,7,8-tetrahydrofolate + L-serine. The protein operates within one-carbon metabolism; tetrahydrofolate interconversion. Its pathway is amino-acid biosynthesis; glycine biosynthesis; glycine from L-serine: step 1/1. Functionally, catalyzes the reversible interconversion of serine and glycine with tetrahydrofolate (THF) serving as the one-carbon carrier. This reaction serves as the major source of one-carbon groups required for the biosynthesis of purines, thymidylate, methionine, and other important biomolecules. Also exhibits THF-independent aldolase activity toward beta-hydroxyamino acids, producing glycine and aldehydes, via a retro-aldol mechanism. In Bifidobacterium adolescentis (strain ATCC 15703 / DSM 20083 / NCTC 11814 / E194a), this protein is Serine hydroxymethyltransferase.